The sequence spans 463 residues: Exodeoxyribonuclease 7 large subunit (463 aa).

It belongs to the XseA family. In terms of assembly, heterooligomer composed of large and small subunits.

Its subcellular location is the cytoplasm. The catalysed reaction is Exonucleolytic cleavage in either 5'- to 3'- or 3'- to 5'-direction to yield nucleoside 5'-phosphates.. Its function is as follows. Bidirectionally degrades single-stranded DNA into large acid-insoluble oligonucleotides, which are then degraded further into small acid-soluble oligonucleotides. This Klebsiella pneumoniae subsp. pneumoniae (strain ATCC 700721 / MGH 78578) protein is Exodeoxyribonuclease 7 large subunit.